Consider the following 261-residue polypeptide: Hemin import ATP-binding protein HmuV (261 aa).

The ABC transporter domain maps to 5 to 241; it reads YTAENLTFTR…DALAHWYGAQ (237 aa). 37 to 44 provides a ligand contact to ATP; sequence GPNGAGKS.

It belongs to the ABC transporter superfamily. Heme (hemin) importer (TC 3.A.1.14.5) family. The complex is composed of two ATP-binding proteins (HmuV), two transmembrane proteins (HmuU) and a solute-binding protein (HmuT).

It is found in the cell inner membrane. Part of the ABC transporter complex HmuTUV involved in hemin import. Responsible for energy coupling to the transport system. This chain is Hemin import ATP-binding protein HmuV, found in Enterobacter cloacae.